A 171-amino-acid polypeptide reads, in one-letter code: O-acetyl-ADP-ribose deacetylase 2 (171 aa).

The Macro domain maps to 1 to 171 (MNKITVIQGD…NYDLYLKLLN (171 aa)). Substrate is bound by residues 10–11 (DI), asparagine 24, 32–34 (GVD), and 121–125 (STGIY). Aspartate 34 (proton acceptor) is an active-site residue.

The protein belongs to the MacroD-type family. YmdB subfamily. Homodimer. Interacts with RNase III.

It carries out the reaction 3''-O-acetyl-ADP-D-ribose + H2O = ADP-D-ribose + acetate + H(+). The enzyme catalyses 2''-O-acetyl-ADP-D-ribose + H2O = ADP-D-ribose + acetate + H(+). Deacetylates O-acetyl-ADP ribose to yield ADP-ribose and free acetate. Down-regulates ribonuclease 3 (RNase III) activity. Acts by interacting directly with the region of the ribonuclease that is required for dimerization/activation. In Pantoea vagans (strain C9-1) (Pantoea agglomerans (strain C9-1)), this protein is O-acetyl-ADP-ribose deacetylase 2.